The primary structure comprises 273 residues: MSSPRQVFYISDRTGLTAENIGEALLNQFGNLSFKRHTHPFVDTPEKARAVVEKVNRSRQENGQRPIAFVSVVDDEIRRIIKGADAFQINFFETFLGLLEKELNTEATVSGQGHHSIGNTKRYDARMEAVNFSLNHDDGVSDKNLQEADVILMGVSRSGKTPTCLYLALQYGIRAANYPLIPDDLESADLPRMVKPYKDKLFGLTIQPERLQAIRQERRPNSAYARIDTCRSEVADAQSMFRRHGIPFANTTDKSVEELAVHILQACKLKRRF.

Residue 154-161 participates in ADP binding; sequence GVSRSGKT.

Belongs to the pyruvate, phosphate/water dikinase regulatory protein family. PSRP subfamily.

It carries out the reaction [pyruvate, water dikinase] + ADP = [pyruvate, water dikinase]-phosphate + AMP + H(+). It catalyses the reaction [pyruvate, water dikinase]-phosphate + phosphate + H(+) = [pyruvate, water dikinase] + diphosphate. In terms of biological role, bifunctional serine/threonine kinase and phosphorylase involved in the regulation of the phosphoenolpyruvate synthase (PEPS) by catalyzing its phosphorylation/dephosphorylation. The sequence is that of Putative phosphoenolpyruvate synthase regulatory protein from Neisseria gonorrhoeae (strain ATCC 700825 / FA 1090).